Here is a 306-residue protein sequence, read N- to C-terminus: Pantothenate kinase (306 aa).

Residue 90–97 coordinates ATP; that stretch reads GSVAVGKS.

It belongs to the prokaryotic pantothenate kinase family.

The protein localises to the cytoplasm. The enzyme catalyses (R)-pantothenate + ATP = (R)-4'-phosphopantothenate + ADP + H(+). The protein operates within cofactor biosynthesis; coenzyme A biosynthesis; CoA from (R)-pantothenate: step 1/5. This Lactococcus lactis subsp. cremoris (strain SK11) protein is Pantothenate kinase.